The sequence spans 70 residues: Small ribosomal subunit protein bS21 (70 aa).

This sequence belongs to the bacterial ribosomal protein bS21 family.

This is Small ribosomal subunit protein bS21 from Methylobacillus flagellatus (strain ATCC 51484 / DSM 6875 / VKM B-1610 / KT).